Consider the following 235-residue polypeptide: Phosphoribosylaminoimidazole-succinocarboxamide synthase (235 aa).

It belongs to the SAICAR synthetase family.

It catalyses the reaction 5-amino-1-(5-phospho-D-ribosyl)imidazole-4-carboxylate + L-aspartate + ATP = (2S)-2-[5-amino-1-(5-phospho-beta-D-ribosyl)imidazole-4-carboxamido]succinate + ADP + phosphate + 2 H(+). It functions in the pathway purine metabolism; IMP biosynthesis via de novo pathway; 5-amino-1-(5-phospho-D-ribosyl)imidazole-4-carboxamide from 5-amino-1-(5-phospho-D-ribosyl)imidazole-4-carboxylate: step 1/2. The protein is Phosphoribosylaminoimidazole-succinocarboxamide synthase of Streptococcus thermophilus (strain ATCC BAA-491 / LMD-9).